The primary structure comprises 455 residues: MSAIMRIHAREVLDSRGNPTIQIEVESEYGYGSAMVPSGASTGEKEAKELRDKGTKYEKNWYGGKGVQTAVDNVNNIIAPKIEGYDVLDQRAIDYEMIKLDGTEFKEKLGANAILGVSLAVAKAAADELNIPLYRYVGGTNGFKLPVPMLNVINGGEHASNTVDFQEFLIMPIGAKTFKEAMQVANKVFHNLKDLLASQGHSTAVGDEGGFAPDLKSHEEVLDFIVSAIKKAGYEPSKKGDKAVAIAIDAASSELFDKKSKTYTFKKLKKAILTKQPGFENLGKVKVEYSSDELVEYFKDLFKKYPIISLEDGFSEHDWDAFTKLNNSVGATHQIMGDDLVTTNPKFIKKAIETKAINSVLIKLNQIGTLSETMDAIEMAHKAGMTCVVSHRSGETEDTTIADLAVALNTGQIKTGSISRTDRVAKYNRLLVIEEELGIVASYEGIQVFHNLKVK.

Gln-166 is a binding site for (2R)-2-phosphoglycerate. The active-site Proton donor is the Glu-208. 3 residues coordinate Mg(2+): Asp-249, Glu-311, and Asp-338. Residues Lys-363, Arg-392, Ser-393, and Lys-414 each coordinate (2R)-2-phosphoglycerate. The active-site Proton acceptor is Lys-363.

This sequence belongs to the enolase family. It depends on Mg(2+) as a cofactor.

It is found in the cytoplasm. It localises to the secreted. Its subcellular location is the cell surface. It carries out the reaction (2R)-2-phosphoglycerate = phosphoenolpyruvate + H2O. The protein operates within carbohydrate degradation; glycolysis; pyruvate from D-glyceraldehyde 3-phosphate: step 4/5. Catalyzes the reversible conversion of 2-phosphoglycerate (2-PG) into phosphoenolpyruvate (PEP). It is essential for the degradation of carbohydrates via glycolysis. This Mycoplasma mobile (strain ATCC 43663 / 163K / NCTC 11711) (Mesomycoplasma mobile) protein is Enolase.